A 751-amino-acid polypeptide reads, in one-letter code: Photosystem I P700 chlorophyll a apoprotein A1 (751 aa).

The next 8 membrane-spanning stretches (helical) occupy residues 73–96 (VFSA…FHGA), 159–182 (LYTT…FHYH), 198–222 (LNHH…HVSL), 294–312 (TVHH…GHQY), 349–372 (WHAQ…HHMY), 388–414 (LSLF…IFMV), 436–458 (AMIS…LYIH), and 533–551 (FMVH…LILL). The [4Fe-4S] cluster site is built by cysteine 575 and cysteine 584. The next 2 helical transmembrane spans lie at 591–612 (HVFL…HFSW) and 665–687 (LSAY…MFLF). Histidine 676 lines the chlorophyll a' pocket. Chlorophyll a is bound by residues methionine 684 and tyrosine 692. Tryptophan 693 contributes to the phylloquinone binding site. Residues 725 to 745 (AVGVAHYLLGGIATTWSFFLA) traverse the membrane as a helical segment.

It belongs to the PsaA/PsaB family. The PsaA/B heterodimer binds the P700 chlorophyll special pair and subsequent electron acceptors. PSI consists of a core antenna complex that captures photons, and an electron transfer chain that converts photonic excitation into a charge separation. The eukaryotic PSI reaction center is composed of at least 11 subunits. It depends on P700 is a chlorophyll a/chlorophyll a' dimer, A0 is one or more chlorophyll a, A1 is one or both phylloquinones and FX is a shared 4Fe-4S iron-sulfur center. as a cofactor.

It is found in the plastid. Its subcellular location is the chloroplast thylakoid membrane. It carries out the reaction reduced [plastocyanin] + hnu + oxidized [2Fe-2S]-[ferredoxin] = oxidized [plastocyanin] + reduced [2Fe-2S]-[ferredoxin]. PsaA and PsaB bind P700, the primary electron donor of photosystem I (PSI), as well as the electron acceptors A0, A1 and FX. PSI is a plastocyanin/cytochrome c6-ferredoxin oxidoreductase, converting photonic excitation into a charge separation, which transfers an electron from the donor P700 chlorophyll pair to the spectroscopically characterized acceptors A0, A1, FX, FA and FB in turn. Oxidized P700 is reduced on the lumenal side of the thylakoid membrane by plastocyanin or cytochrome c6. The chain is Photosystem I P700 chlorophyll a apoprotein A1 from Chlorella vulgaris (Green alga).